We begin with the raw amino-acid sequence, 267 residues long: Mannose-specific lectin 1 (267 aa).

The first 26 residues, 1–26 (MAKLLLFLLPAILGLLVPPRSWSAVA), serve as a signal peptide directing secretion. 2 Bulb-type lectin domains span residues 29-134 (TNYL…PSVP) and 148-255 (NNLL…PQAK). Beta-D-mannose contacts are provided by residues 54–58 (QDDCN), tyrosine 62, tryptophan 66, glutamine 67, 173–177 (QGDCN), tyrosine 181, and 185–188 (YGWQ). Residues 54-62 (QDDCNLVLY) carry the Carbohydrate-binding motif 1 motif. Disulfide bonds link cysteine 57–cysteine 77 and cysteine 176–cysteine 198. The Carbohydrate-binding motif 2 motif lies at 173 to 181 (QGDCNLVLY).

As to quaternary structure, forms heterotetramer of 2 chains 1 and 2 chains 2 arranged as a dimer of chain 1 and chain 2 heterodimers.

It localises to the secreted. In terms of biological role, mannose-specific lectin. Shows agglutinating activity towards erythrocytes from rabbit. The chain is Mannose-specific lectin 1 from Colocasia esculenta (Wild taro).